The following is a 283-amino-acid chain: MTKLITTVKEMQHIVKAAKRSGTTIGFIPTMGALHDGHLTMVRESVSTNDITVVSVFVNPLQFGPNEDFDAYPRQIDKDLELVSEVGADIVFHPAVEDIYPGELGIDVKVGPLADVLEGAKRPGHFDGVVTVVNKLFNIVMPDYAYFGKKDAQQLAIVEQMVKDFNHAVEIIGIDIVREADGLAKSSRNVYLTEQERQEAVHLSKSLLLAQALYQDGERQSKVIIDRVTEYLESHISGRIEEVAVYSYPQLVEQHEITGRIFISLAVKFSKARLIDNIIIGAE.

31 to 38 (MGALHDGH) is a binding site for ATP. Catalysis depends on histidine 38, which acts as the Proton donor. Position 62 (glutamine 62) interacts with (R)-pantoate. Glutamine 62 is a beta-alanine binding site. Residue 148-151 (GKKD) participates in ATP binding. Glutamine 154 is a (R)-pantoate binding site. Residues valine 177 and 185 to 188 (KSSR) contribute to the ATP site.

The protein belongs to the pantothenate synthetase family. As to quaternary structure, homodimer.

The protein resides in the cytoplasm. It catalyses the reaction (R)-pantoate + beta-alanine + ATP = (R)-pantothenate + AMP + diphosphate + H(+). Its pathway is cofactor biosynthesis; (R)-pantothenate biosynthesis; (R)-pantothenate from (R)-pantoate and beta-alanine: step 1/1. Catalyzes the condensation of pantoate with beta-alanine in an ATP-dependent reaction via a pantoyl-adenylate intermediate. The protein is Pantothenate synthetase of Staphylococcus aureus (strain Mu3 / ATCC 700698).